The sequence spans 207 residues: Thymidylate kinase (207 aa).

Position 7–14 (7–14 (GCEGTGKT)) interacts with ATP.

This sequence belongs to the thymidylate kinase family.

The enzyme catalyses dTMP + ATP = dTDP + ADP. In terms of biological role, phosphorylation of dTMP to form dTDP in both de novo and salvage pathways of dTTP synthesis. In Onion yellows phytoplasma (strain OY-M), this protein is Thymidylate kinase.